Consider the following 383-residue polypeptide: Succinyl-diaminopimelate desuccinylase (383 aa).

His79 is a binding site for Zn(2+). Asp81 is an active-site residue. Asp110 provides a ligand contact to Zn(2+). Glu141 functions as the Proton acceptor in the catalytic mechanism. Glu142, Glu170, and His355 together coordinate Zn(2+).

This sequence belongs to the peptidase M20A family. DapE subfamily. In terms of assembly, homodimer. Zn(2+) is required as a cofactor. Requires Co(2+) as cofactor.

The enzyme catalyses N-succinyl-(2S,6S)-2,6-diaminopimelate + H2O = (2S,6S)-2,6-diaminopimelate + succinate. The protein operates within amino-acid biosynthesis; L-lysine biosynthesis via DAP pathway; LL-2,6-diaminopimelate from (S)-tetrahydrodipicolinate (succinylase route): step 3/3. Its function is as follows. Catalyzes the hydrolysis of N-succinyl-L,L-diaminopimelic acid (SDAP), forming succinate and LL-2,6-diaminopimelate (DAP), an intermediate involved in the bacterial biosynthesis of lysine and meso-diaminopimelic acid, an essential component of bacterial cell walls. This Helicobacter pylori (strain Shi470) protein is Succinyl-diaminopimelate desuccinylase.